Here is a 361-residue protein sequence, read N- to C-terminus: Probable pectinesterase 50 (361 aa).

The N-terminal stretch at 1–22 (MGYISMSVVAFLVVFASPVVLA) is a signal peptide. Gln-174 is a substrate binding site. The Proton donor role is filled by Asp-197. Asp-218 functions as the Nucleophile in the catalytic mechanism. 2 residues coordinate substrate: Arg-275 and Trp-277.

It belongs to the pectinesterase family. As to expression, expressed in flower buds.

It localises to the secreted. The protein resides in the cell wall. The enzyme catalyses [(1-&gt;4)-alpha-D-galacturonosyl methyl ester](n) + n H2O = [(1-&gt;4)-alpha-D-galacturonosyl](n) + n methanol + n H(+). It participates in glycan metabolism; pectin degradation; 2-dehydro-3-deoxy-D-gluconate from pectin: step 1/5. Functionally, acts in the modification of cell walls via demethylesterification of cell wall pectin. This Arabidopsis thaliana (Mouse-ear cress) protein is Probable pectinesterase 50 (PME50).